The primary structure comprises 437 residues: UDP-N-acetylmuramate--L-alanine ligase (437 aa).

Residue 108-114 (GAHGKTS) coordinates ATP.

This sequence belongs to the MurCDEF family.

Its subcellular location is the cytoplasm. It carries out the reaction UDP-N-acetyl-alpha-D-muramate + L-alanine + ATP = UDP-N-acetyl-alpha-D-muramoyl-L-alanine + ADP + phosphate + H(+). It functions in the pathway cell wall biogenesis; peptidoglycan biosynthesis. Its function is as follows. Cell wall formation. The chain is UDP-N-acetylmuramate--L-alanine ligase from Lysinibacillus sphaericus (strain C3-41).